A 126-amino-acid polypeptide reads, in one-letter code: Nascent polypeptide-associated complex protein (126 aa).

The NAC-A/B domain occupies 10–77 (PRMMKQMQKM…AKKVAKEEEK (68 aa)).

It belongs to the NAC-alpha family. Homodimer. Interacts with the ribosome. Binds ribosomal RNA.

In terms of biological role, contacts the emerging nascent chain on the ribosome. The chain is Nascent polypeptide-associated complex protein from Methanococcus maripaludis (strain C7 / ATCC BAA-1331).